A 571-amino-acid polypeptide reads, in one-letter code: Sulfite reductase [NADPH] hemoprotein beta-component (571 aa).

Cys435, Cys441, Cys480, and Cys484 together coordinate [4Fe-4S] cluster. Cys484 contributes to the siroheme binding site.

The protein belongs to the nitrite and sulfite reductase 4Fe-4S domain family. In terms of assembly, alpha(8)-beta(8). The alpha component is a flavoprotein, the beta component is a hemoprotein. Siroheme is required as a cofactor. It depends on [4Fe-4S] cluster as a cofactor.

It catalyses the reaction hydrogen sulfide + 3 NADP(+) + 3 H2O = sulfite + 3 NADPH + 4 H(+). Its pathway is sulfur metabolism; hydrogen sulfide biosynthesis; hydrogen sulfide from sulfite (NADPH route): step 1/1. Component of the sulfite reductase complex that catalyzes the 6-electron reduction of sulfite to sulfide. This is one of several activities required for the biosynthesis of L-cysteine from sulfate. The chain is Sulfite reductase [NADPH] hemoprotein beta-component from Serratia proteamaculans (strain 568).